Here is a 175-residue protein sequence, read N- to C-terminus: Tail fiber assembly protein U (175 aa).

This sequence belongs to the tfa family.

The protein resides in the virion. The protein localises to the host cytoplasm. Its function is as follows. Chaperone involved in tail fiber assembly. Remains associated to the tail fiber and participates in the host receptor binding. Binds to the primary receptor. Two alternate tail fiber assembly proteins U and U' are encoded extending the host range of the virus. This is Tail fiber assembly protein U (U) from Enterobacteriaceae (Bacteriophage Mu).